Here is a 222-residue protein sequence, read N- to C-terminus: Dihydrophenazinedicarboxylate synthase (222 aa).

Ser18 contacts substrate. FMN-binding positions include 73 to 76 (RIVV) and 88 to 89 (ST). Residue His90 coordinates substrate. Residues 94–95 (QK) and Gln117 contribute to the FMN site. Residues Arg139 and Ser147 each coordinate substrate. FMN-binding positions include 152–153 (QS) and Arg205.

It belongs to the pyridoxamine 5'-phosphate oxidase family. Requires FMN as cofactor.

It carries out the reaction (1R,6R)-1,4,5,5a,6,9-hexahydrophenazine-1,6-dicarboxylate + O2 = (1R,10aS)-1,4,10,10a-tetrahydrophenazine-1,6-dicarboxylate + H2O2. The catalysed reaction is (1R,10aS)-1,4,10,10a-tetrahydrophenazine-1,6-dicarboxylate + O2 = (5aS)-5,5a-dihydrophenazine-1,6-dicarboxylate + H2O2. It catalyses the reaction (1R,10aS)-1,4,10,10a-tetrahydrophenazine-1-carboxylate + O2 = (10aS)-10,10a-dihydrophenazine-1-carboxylate + H2O2. The enzyme catalyses (1R)-1,4,5,10-tetrahydrophenazine-1-carboxylate + O2 = (10aS)-10,10a-dihydrophenazine-1-carboxylate + H2O2. It functions in the pathway antibiotic biosynthesis; phenazine biosynthesis. Functionally, involved in the biosynthesis of the antibiotic phenazine, a nitrogen-containing heterocyclic molecule having important roles in virulence, competition and biological control. Catalyzes several oxidations in the terminal steps of core phenazine biosynthesis. It oxidizes both hexahydrophenazine-1,6-dicarboxylic acid (HHPDC) and tetrahydrophenazine-1-carboxylic acid (THPCA) and thereby contributes to the generation of both phenazine-1,6-dicarboxylic acid (PDC) and phenazine-1-carboxylic acid (PCA). The chain is Dihydrophenazinedicarboxylate synthase from Pseudomonas chlororaphis (Pseudomonas aureofaciens).